Consider the following 69-residue polypeptide: Large ribosomal subunit protein bL31 (69 aa).

Residues cysteine 17, cysteine 19, cysteine 37, and cysteine 40 each contribute to the Zn(2+) site.

It belongs to the bacterial ribosomal protein bL31 family. Type A subfamily. As to quaternary structure, part of the 50S ribosomal subunit. Zn(2+) is required as a cofactor.

Functionally, binds the 23S rRNA. This is Large ribosomal subunit protein bL31 from Caldicellulosiruptor bescii (strain ATCC BAA-1888 / DSM 6725 / KCTC 15123 / Z-1320) (Anaerocellum thermophilum).